The chain runs to 373 residues: Probable G-protein coupled receptor 173 (373 aa).

The Extracellular portion of the chain corresponds to 1-26; it reads MANTTGEPEEVSGALSPPSASAYVKL. Asn3 is a glycosylation site (N-linked (GlcNAc...) asparagine). The chain crosses the membrane as a helical span at residues 27 to 47; that stretch reads VLLGLIMCVSLAGNAILSLLV. Topologically, residues 48 to 59 are cytoplasmic; sequence LKERALHKAPYY. A helical membrane pass occupies residues 60–80; sequence FLLDLCLADGIRSAVCFPFVL. Topologically, residues 81-97 are extracellular; sequence ASVRHGSSWTFSALSCK. Cys96 and Cys174 are oxidised to a cystine. A helical transmembrane segment spans residues 98 to 118; sequence IVAFMAVLFCFHAAFMLFCIS. Over 119–139 the chain is Cytoplasmic; sequence VTRYMAIAHHRFYAKRMTLWT. A helical membrane pass occupies residues 140 to 160; sequence CAAVICMAWTLSVAMAFPPVF. The Extracellular portion of the chain corresponds to 161-188; sequence DVGTYKFIREEDQCIFEHRYFKANDTLG. N-linked (GlcNAc...) asparagine glycosylation occurs at Asn184. A helical membrane pass occupies residues 189 to 209; that stretch reads FMLMLAVLMAATHAVYGKLLL. Residues 210–287 are Cytoplasmic-facing; that stretch reads FEYRHRKMKP…VKGEKQLGRM (78 aa). A helical transmembrane segment spans residues 288–308; the sequence is FYAITLLFLLLWSPYIVACYW. Topologically, residues 309–322 are extracellular; that stretch reads RVFVKACAVPHRYL. The helical transmembrane segment at 323-343 threads the bilayer; it reads ATAVWMSFAQAAVNPIVCFLL. Topologically, residues 344–373 are cytoplasmic; sequence NKDLKKCLRTHAPCWGTGGAPAPREPYCVM.

Belongs to the G-protein coupled receptor 1 family. As to expression, expressed in the ovary, specifically in granulosa cells of follicles that have passed the primary stage and in oocytes (at protein level). Expressed at high levels in brain. Lower levels in small intestine. In brain regions, detected in all regions tested. Highest levels in the cerebellum and cerebral cortex.

It localises to the cell membrane. Is a receptor for the SMIM20 derived peptides Phoenixin-14 and Phoenixin-20. It mediates the Phoenixin-14 and Phoenixin-20 augmentation of gonadotropin-releasing hormone (GNRH) signaling in the hypothalamus and pituitary gland. In the ovary, it mediates the effects of Phoenixin-14 and Phoenixin-20 induced granulosa cell proliferation during follicular growth. The polypeptide is Probable G-protein coupled receptor 173 (GPR173) (Homo sapiens (Human)).